We begin with the raw amino-acid sequence, 86 residues long: Electron transfer flavoprotein regulatory factor 1 (86 aa).

Belongs to the complex I LYR family. Homotetramer. Interacts with NDUFAB1. Interacts with ETFA. Interacts with ETFB.

The protein localises to the mitochondrion. In terms of biological role, acts as a regulator of the electron transfer flavoprotein by promoting the removal of flavin from the ETF holoenzyme (composed of ETFA and ETFB). The polypeptide is Electron transfer flavoprotein regulatory factor 1 (Mus musculus (Mouse)).